A 305-amino-acid polypeptide reads, in one-letter code: UDP-3-O-acyl-N-acetylglucosamine deacetylase (305 aa).

Zn(2+) contacts are provided by His-79, His-238, and Asp-242. Catalysis depends on His-265, which acts as the Proton donor.

The protein belongs to the LpxC family. Zn(2+) is required as a cofactor.

The enzyme catalyses a UDP-3-O-[(3R)-3-hydroxyacyl]-N-acetyl-alpha-D-glucosamine + H2O = a UDP-3-O-[(3R)-3-hydroxyacyl]-alpha-D-glucosamine + acetate. Its pathway is glycolipid biosynthesis; lipid IV(A) biosynthesis; lipid IV(A) from (3R)-3-hydroxytetradecanoyl-[acyl-carrier-protein] and UDP-N-acetyl-alpha-D-glucosamine: step 2/6. Catalyzes the hydrolysis of UDP-3-O-myristoyl-N-acetylglucosamine to form UDP-3-O-myristoylglucosamine and acetate, the committed step in lipid A biosynthesis. The chain is UDP-3-O-acyl-N-acetylglucosamine deacetylase from Salmonella typhi.